Reading from the N-terminus, the 540-residue chain is GMP synthase [glutamine-hydrolyzing] (540 aa).

One can recognise a Glutamine amidotransferase type-1 domain in the interval 24-217 (KILIVDFGSQ…VRKVAGLTGD (194 aa)). The active-site Nucleophile is the Cys-101. Residues His-191 and Glu-193 contribute to the active site. In terms of domain architecture, GMPS ATP-PPase spans 218–415 (WTMRAFREEA…LGLPEIFVGR (198 aa)). 245 to 251 (SGGVDSS) is an ATP binding site.

As to quaternary structure, homodimer.

It catalyses the reaction XMP + L-glutamine + ATP + H2O = GMP + L-glutamate + AMP + diphosphate + 2 H(+). The protein operates within purine metabolism; GMP biosynthesis; GMP from XMP (L-Gln route): step 1/1. Functionally, catalyzes the synthesis of GMP from XMP. This Nitrobacter hamburgensis (strain DSM 10229 / NCIMB 13809 / X14) protein is GMP synthase [glutamine-hydrolyzing].